The primary structure comprises 459 residues: MAKPSQPTRDSHVAVLVFPFGTHAAPLLAVTCRLATAAPSTVFSFFSTARSNSSLLSSDIPTNIRVHNVDDGVPEGFVLTGNPQHAVELFLEAAPEIFRREIKAAETEVGRKFKCILTDAFLWLAAETAAAEMKASWVAYYGGGATSLTAHLYTDAIRENVGVKEVGERMEETIGFISGMEKIRVKDTQEGVVFGNLDSVFSKTLHQMGLALPRATAVFINSFEELDPTFTNDFRSEFKRYLNIGPLALLSSPSQTSTLVHDPHGCLAWIEKRSTASVAYIAFGRVATPPPVELVAIAQGLESSKVPFVWSLQEMKMTHLPEGFLDRTREQGMVVPWAPQVELLNHEAMGVFVSHGGWNSVLESVSAGVPMICRPIFGDHAINARSVEAVWEIGVTISSGVFTKDGFEESLDRVLVQDDGKKMKVNAKKLEELAQEAVSTKGSSFENFGGLLDEVVNFG.

Residues 338–340, 355–363, and 377–380 each bind UDP-alpha-D-glucose; these read APQ, HGGWNSVLE, and FGDH.

Belongs to the UDP-glycosyltransferase family.

Its function is as follows. Possesses low quercetin 3-O-glucosyltransferase activity in vitro. This is UDP-glycosyltransferase 78D3 (UGT78D3) from Arabidopsis thaliana (Mouse-ear cress).